Reading from the N-terminus, the 126-residue chain is MARITAEDCNKIIPDRFRLVVLATRYAKLLNYKVETNQIKKEKRDKPPVISLRRIAAGKVSVEQLEQDLINSLRTKTMIEPIVNQDESEDIEEKFEYLPEVCITEDYSDLDDQIFIDETGDDFEDK.

It belongs to the RNA polymerase subunit omega family. In terms of assembly, the RNAP catalytic core consists of 2 alpha, 1 beta, 1 beta' and 1 omega subunit. When a sigma factor is associated with the core the holoenzyme is formed, which can initiate transcription.

The enzyme catalyses RNA(n) + a ribonucleoside 5'-triphosphate = RNA(n+1) + diphosphate. Its function is as follows. Promotes RNA polymerase assembly. Latches the N- and C-terminal regions of the beta' subunit thereby facilitating its interaction with the beta and alpha subunits. This is DNA-directed RNA polymerase subunit omega from Rickettsia felis (strain ATCC VR-1525 / URRWXCal2) (Rickettsia azadi).